The chain runs to 355 residues: MKKNKRLMVMAGGTGGHVFPGLAVAKQLQEQGWEIRWLGTADRMEADLVPKHGIEIDFIKVKGLRGQGVKRLLAAPFQIINAIMQARAHMKRWQPDAVLGMGGYVSGPGGIAAWMSGIPVVLHEQNAVAGLTNQWLSKIAKKVFQAFPGAFPNAEVVGNPVREDVTQLAAPTERMQERQGPIRILVMGGSQGARILNQTLPEVMAKLGDDYSIRHQAGKGSAEEVNAAYQANGVANADVTEFIHDVAEAYAWADLLVCRSGALTVSEVSAAGVGAIFVPFMHKDRQQALNADHLVDCGAAKMIEQPDLTVESLTQQIQQLDRQALLTMAEQARGAAKLNADRVVAQAIVALTEKR.

UDP-N-acetyl-alpha-D-glucosamine is bound by residues 14–16, N126, R162, S190, I243, 262–267, and Q287; these read TGG and ALTVSE.

Belongs to the glycosyltransferase 28 family. MurG subfamily.

The protein localises to the cell inner membrane. It carries out the reaction di-trans,octa-cis-undecaprenyl diphospho-N-acetyl-alpha-D-muramoyl-L-alanyl-D-glutamyl-meso-2,6-diaminopimeloyl-D-alanyl-D-alanine + UDP-N-acetyl-alpha-D-glucosamine = di-trans,octa-cis-undecaprenyl diphospho-[N-acetyl-alpha-D-glucosaminyl-(1-&gt;4)]-N-acetyl-alpha-D-muramoyl-L-alanyl-D-glutamyl-meso-2,6-diaminopimeloyl-D-alanyl-D-alanine + UDP + H(+). It functions in the pathway cell wall biogenesis; peptidoglycan biosynthesis. Cell wall formation. Catalyzes the transfer of a GlcNAc subunit on undecaprenyl-pyrophosphoryl-MurNAc-pentapeptide (lipid intermediate I) to form undecaprenyl-pyrophosphoryl-MurNAc-(pentapeptide)GlcNAc (lipid intermediate II). This chain is UDP-N-acetylglucosamine--N-acetylmuramyl-(pentapeptide) pyrophosphoryl-undecaprenol N-acetylglucosamine transferase, found in Vibrio campbellii (strain ATCC BAA-1116).